The sequence spans 202 residues: MSRYRGPRLKIIRRLGELPGLTRKTPKLKPDYINKSTPNKKVSQYCIRLEEKQKLRFHHGLAEQQLLKYVRIARRAKGSTGQVLLQLLEMRLDNIIFRLGMAPTIPGARQLVNHKHILVNNRAINVPSYRCKPKDIITTRDRPESRARITKNYEFSQTYKIPNHLTLHSLQSVGLVNKIVDRESIDLNINELLVVEYYSRKA.

Positions 90 to 159 (MRLDNIIFRL…TKNYEFSQTY (70 aa)) constitute an S4 RNA-binding domain.

It belongs to the universal ribosomal protein uS4 family. As to quaternary structure, part of the 30S ribosomal subunit. Contacts protein S5. The interaction surface between S4 and S5 is involved in control of translational fidelity.

The protein resides in the plastid. It is found in the chloroplast. Functionally, one of the primary rRNA binding proteins, it binds directly to 16S rRNA where it nucleates assembly of the body of the 30S subunit. Its function is as follows. With S5 and S12 plays an important role in translational accuracy. This chain is Small ribosomal subunit protein uS4c (rps4), found in Huperzia lucidula (Shining clubmoss).